We begin with the raw amino-acid sequence, 362 residues long: Chorismate synthase (362 aa).

Residues arginine 48 and arginine 54 each coordinate NADP(+). FMN-binding positions include 125 to 127 (RSS), 237 to 238 (NA), glycine 277, 292 to 296 (KPTSS), and arginine 318.

The protein belongs to the chorismate synthase family. Homotetramer. It depends on FMNH2 as a cofactor.

It catalyses the reaction 5-O-(1-carboxyvinyl)-3-phosphoshikimate = chorismate + phosphate. Its pathway is metabolic intermediate biosynthesis; chorismate biosynthesis; chorismate from D-erythrose 4-phosphate and phosphoenolpyruvate: step 7/7. Its function is as follows. Catalyzes the anti-1,4-elimination of the C-3 phosphate and the C-6 proR hydrogen from 5-enolpyruvylshikimate-3-phosphate (EPSP) to yield chorismate, which is the branch point compound that serves as the starting substrate for the three terminal pathways of aromatic amino acid biosynthesis. This reaction introduces a second double bond into the aromatic ring system. The protein is Chorismate synthase of Idiomarina loihiensis (strain ATCC BAA-735 / DSM 15497 / L2-TR).